Consider the following 88-residue polypeptide: Large ribosomal subunit protein bL27 (88 aa).

Residues methionine 1–tyrosine 26 form a disordered region.

Belongs to the bacterial ribosomal protein bL27 family.

The protein is Large ribosomal subunit protein bL27 of Prochlorococcus marinus (strain MIT 9211).